Consider the following 140-residue polypeptide: Putative pre-16S rRNA nuclease (140 aa).

Belongs to the YqgF nuclease family.

It is found in the cytoplasm. In terms of biological role, could be a nuclease involved in processing of the 5'-end of pre-16S rRNA. This Mannheimia succiniciproducens (strain KCTC 0769BP / MBEL55E) protein is Putative pre-16S rRNA nuclease.